We begin with the raw amino-acid sequence, 732 residues long: Catalase-peroxidase (732 aa).

Positions 1-26 are disordered; sequence MADNKKSPETGGITMQIPGKGRTNRD. The tryptophyl-tyrosyl-methioninium (Trp-Tyr) (with M-245) cross-link spans 96–219; the sequence is WHSAGTYRTF…LAAVQMGLIY (124 aa). H97 serves as the catalytic Proton acceptor. Positions 219–245 form a cross-link, tryptophyl-tyrosyl-methioninium (Tyr-Met) (with W-96); the sequence is YVNPEGPDGNPDPVAAARDIREVFARM. H260 contributes to the heme b binding site. Residues 344–365 are disordered; that stretch reads KPKGEAGAGTVPDPHDPKKRHA.

This sequence belongs to the peroxidase family. Peroxidase/catalase subfamily. Homodimer or homotetramer. Requires heme b as cofactor. In terms of processing, formation of the three residue Trp-Tyr-Met cross-link is important for the catalase, but not the peroxidase activity of the enzyme.

The catalysed reaction is H2O2 + AH2 = A + 2 H2O. It catalyses the reaction 2 H2O2 = O2 + 2 H2O. Bifunctional enzyme with both catalase and broad-spectrum peroxidase activity. This Methanospirillum hungatei JF-1 (strain ATCC 27890 / DSM 864 / NBRC 100397 / JF-1) protein is Catalase-peroxidase.